Reading from the N-terminus, the 102-residue chain is Thioredoxin (102 aa).

The Thioredoxin domain occupies 1 to 102 (MVKIISSENF…FLTNLINKHA (102 aa)). Residues Cys28 and Cys31 are joined by a disulfide bond.

This sequence belongs to the thioredoxin family.

Participates in various redox reactions through the reversible oxidation of its active center dithiol to a disulfide and catalyzes dithiol-disulfide exchange reactions. The sequence is that of Thioredoxin (trxA) from Chlamydia pneumoniae (Chlamydophila pneumoniae).